The sequence spans 137 residues: Large ribosomal subunit protein uL16 (137 aa).

This sequence belongs to the universal ribosomal protein uL16 family. As to quaternary structure, part of the 50S ribosomal subunit.

Functionally, binds 23S rRNA and is also seen to make contacts with the A and possibly P site tRNAs. This chain is Large ribosomal subunit protein uL16, found in Endomicrobium trichonymphae.